Reading from the N-terminus, the 765-residue chain is FHF complex subunit HOOK interacting protein 2A (765 aa).

Disordered regions lie at residues 193 to 236 (TLKG…DHLS) and 532 to 561 (TDIS…KNDG). Polar residues-rich tracts occupy residues 196-208 (GQDS…GQSR) and 535-550 (SPEN…SSSP).

The protein belongs to the FHIP family. In terms of tissue distribution, expressed in all tissues tested, highly expressed brain. As to expression, only detected at high levels in testis.

Functionally, required for proper functioning of the nervous system. The sequence is that of FHF complex subunit HOOK interacting protein 2A from Homo sapiens (Human).